Reading from the N-terminus, the 132-residue chain is Ribosome-binding factor A (132 aa).

It belongs to the RbfA family. Monomer. Binds 30S ribosomal subunits, but not 50S ribosomal subunits or 70S ribosomes.

The protein localises to the cytoplasm. In terms of biological role, one of several proteins that assist in the late maturation steps of the functional core of the 30S ribosomal subunit. Associates with free 30S ribosomal subunits (but not with 30S subunits that are part of 70S ribosomes or polysomes). Required for efficient processing of 16S rRNA. May interact with the 5'-terminal helix region of 16S rRNA. This chain is Ribosome-binding factor A, found in Caldicellulosiruptor bescii (strain ATCC BAA-1888 / DSM 6725 / KCTC 15123 / Z-1320) (Anaerocellum thermophilum).